The following is a 453-amino-acid chain: Bifunctional protein GlmU (453 aa).

Positions 1–225 (MNIVILAAGT…EWETLGVNSK (225 aa)) are pyrophosphorylase. Residues 6–9 (LAAG), Lys20, Gln71, 76–77 (GT), 98–100 (YGD), Gly135, Glu150, Asn165, and Asn223 contribute to the UDP-N-acetyl-alpha-D-glucosamine site. Asp100 contacts Mg(2+). Asn223 contributes to the Mg(2+) binding site. The segment at 226 to 246 (AQLAELERIHQRNVADALLAD) is linker. Positions 247-453 (GVTLADPARI…GYVRPVKKKS (207 aa)) are N-acetyltransferase. Arg329 and Lys347 together coordinate UDP-N-acetyl-alpha-D-glucosamine. His359 acts as the Proton acceptor in catalysis. Tyr362 and Asn373 together coordinate UDP-N-acetyl-alpha-D-glucosamine. Residues Ala376, 382–383 (NY), Ser401, and Ala419 contribute to the acetyl-CoA site.

It in the N-terminal section; belongs to the N-acetylglucosamine-1-phosphate uridyltransferase family. In the C-terminal section; belongs to the transferase hexapeptide repeat family. As to quaternary structure, homotrimer. Mg(2+) serves as cofactor.

The protein localises to the cytoplasm. It catalyses the reaction alpha-D-glucosamine 1-phosphate + acetyl-CoA = N-acetyl-alpha-D-glucosamine 1-phosphate + CoA + H(+). It carries out the reaction N-acetyl-alpha-D-glucosamine 1-phosphate + UTP + H(+) = UDP-N-acetyl-alpha-D-glucosamine + diphosphate. It functions in the pathway nucleotide-sugar biosynthesis; UDP-N-acetyl-alpha-D-glucosamine biosynthesis; N-acetyl-alpha-D-glucosamine 1-phosphate from alpha-D-glucosamine 6-phosphate (route II): step 2/2. The protein operates within nucleotide-sugar biosynthesis; UDP-N-acetyl-alpha-D-glucosamine biosynthesis; UDP-N-acetyl-alpha-D-glucosamine from N-acetyl-alpha-D-glucosamine 1-phosphate: step 1/1. Its pathway is bacterial outer membrane biogenesis; LPS lipid A biosynthesis. Functionally, catalyzes the last two sequential reactions in the de novo biosynthetic pathway for UDP-N-acetylglucosamine (UDP-GlcNAc). The C-terminal domain catalyzes the transfer of acetyl group from acetyl coenzyme A to glucosamine-1-phosphate (GlcN-1-P) to produce N-acetylglucosamine-1-phosphate (GlcNAc-1-P), which is converted into UDP-GlcNAc by the transfer of uridine 5-monophosphate (from uridine 5-triphosphate), a reaction catalyzed by the N-terminal domain. The chain is Bifunctional protein GlmU from Burkholderia multivorans (strain ATCC 17616 / 249).